Here is a 276-residue protein sequence, read N- to C-terminus: Aurora kinase C (276 aa).

In terms of domain architecture, Protein kinase spans 16 to 266 (FEIGRPLGRG…LAQVLKHPWV (251 aa)). Residues 22-30 (LGRGKFGRV) and Lys-45 each bind ATP. Asp-139 functions as the Proton acceptor in the catalytic mechanism. Position 171 is a phosphothreonine; by PKA (Thr-171).

Belongs to the protein kinase superfamily. Ser/Thr protein kinase family. Aurora subfamily. Component of the chromosomal passenger complex (CPC) composed of at least BIRC5/survivin, CDCA8/borealin, INCENP, AURKB or AURKC; predominantly independent AURKB- and AURKC-containing complexes exist; in the complex interacts directly with BIRC5/survivin and INCENP. Interacts with TACC1. As to expression, expressed only in testis.

The protein localises to the nucleus. The protein resides in the chromosome. Its subcellular location is the centromere. It is found in the cytoplasm. It localises to the cytoskeleton. The protein localises to the spindle. It catalyses the reaction L-seryl-[protein] + ATP = O-phospho-L-seryl-[protein] + ADP + H(+). The catalysed reaction is L-threonyl-[protein] + ATP = O-phospho-L-threonyl-[protein] + ADP + H(+). With respect to regulation, okadaic acid, an inhibitor of protein phosphatase 1 (PP1), protein phosphatase 2A (PP2A) and protein phosphatase 5 (PP5), increases AURKC activity. AURKC is also stabilized through its interaction with INCENP, which also acts as an activator. In terms of biological role, serine/threonine-protein kinase component of the chromosomal passenger complex (CPC), a complex that acts as a key regulator of mitosis. The CPC complex has essential functions at the centromere in ensuring correct chromosome alignment and segregation and is required for chromatin-induced microtubule stabilization and spindle assembly. Also plays a role in meiosis and more particularly in spermatogenesis. Has redundant cellular functions with AURKB and can rescue an AURKB knockdown. Like AURKB, AURKC phosphorylates histone H3 at 'Ser-10' and 'Ser-28'. AURKC phosphorylates the CPC complex subunits BIRC5/survivin and INCENP leading to increased AURKC activity. Phosphorylates TACC1, another protein involved in cell division, at 'Ser-228'. This Mus musculus (Mouse) protein is Aurora kinase C (Aurkc).